Consider the following 229-residue polypeptide: Uracil-DNA glycosylase (229 aa).

The active-site Proton acceptor is Asp67.

This sequence belongs to the uracil-DNA glycosylase (UDG) superfamily. UNG family.

It localises to the cytoplasm. The catalysed reaction is Hydrolyzes single-stranded DNA or mismatched double-stranded DNA and polynucleotides, releasing free uracil.. Its function is as follows. Excises uracil residues from the DNA which can arise as a result of misincorporation of dUMP residues by DNA polymerase or due to deamination of cytosine. In Coxiella burnetii (strain CbuK_Q154) (Coxiella burnetii (strain Q154)), this protein is Uracil-DNA glycosylase.